The following is a 79-amino-acid chain: Sulfur carrier protein TusA (79 aa).

C17 functions as the Cysteine persulfide intermediate in the catalytic mechanism.

Belongs to the sulfur carrier protein TusA family.

The protein localises to the cytoplasm. In terms of biological role, sulfur carrier protein which probably makes part of a sulfur-relay system. The polypeptide is Sulfur carrier protein TusA (Actinobacillus succinogenes (strain ATCC 55618 / DSM 22257 / CCUG 43843 / 130Z)).